The following is a 942-amino-acid chain: MSTAEASATTADAAEAGGRTKTGSPRTIPVFGVAIPDGEMQGIFKPMDLNRIIKVLEEEDKDVSEEKQLNYIKKLIHCYQNGFPLRDLAQIFKILSLCAEKIEKQPCFVEPASDIIKLCGLPFLKKKVSDEITYTEDTANSFALLGELMKIPSSALRIQICKCIVDFYHAEPLKKHIPGYQQVSSSYKIKMVEVGGLAKAMVQSALLLENQLVEKLWVLKVLQHLSTSGVNCTLMVKAQAASGICAHLNDPDPSGQLLFRSSEVLWNLLEKSSKEEIIQQLSNLECLLALKEVFKNLFVRGHSHYERQLRNDILVITTIIAQNPGAPMIECGFTRDLILFATFNEVKSQNPLVKSLKLFNCYEDFELKKLLFNIIVILCKDLATVQLLIDGKVILALFTYVKKPERLKIMEWSAAQYEELQLHAIATLSSVAPLLIEEYMSCHGNSRILAFLEWCGHEDSYFIHGNSFHGTGGRGNKFAQMRYTLRLLRAMVYLEDETVNKDLCERGVIHQLIEIFKTMMSRPAEKEEAIALEIQSDTLLILSGLCENYIQRKEMFGTEGVDIVLHVMKTDPKNLQRGLGYNVLLFSTLDSIWCCILGCYDSEDYFLEKEGIFLLLDILALNQKKFCNLILGIMVEFCDNPKTSAHVNAWRGKKDLTAASLLIKLWRKEEKELGVKRDRNGKIVDTKRPLFTSFQEEQKTMPLPANCPSIAVMDVAENIRAKIYAVLDKLDFENLPGLSAEDFVTLCIIHRYFDFKIGEIWNEVSEEIKLEKLRLVTTDEKSLNSIIAATENIGKMVASLQSEMIENQALQDVQNEQRVYAKIQATHKQREQANKSWENFLARTSNAKTLKKAKKLQEKAIESSRYTERPQNATFHQTVIKGLNTTVPSGRVVTVQSTPTRLLGGPLADTDIALKKLPIRGGALQRVKVKPPLNDPKKSIPT.

The span at 1 to 16 (MSTAEASATTADAAEA) shows a compositional bias: low complexity. The disordered stretch occupies residues 1-25 (MSTAEASATTADAAEAGGRTKTGSP).

In terms of tissue distribution, expressed in ciliated olfactory sensory neurons (at protein level). Expressed in testis, specifically in sperm (at protein level).

The protein localises to the cell projection. Its subcellular location is the cilium. It localises to the flagellum. Its function is as follows. Cilium- and flagellum-associated protein. In the olfactory epithelium, regulates the speed of activation and termination of the odor response and thus contributes to the robustness of olfactory transduction pathways. Required for sperm flagellum assembly and stability. The chain is Cilia- and flagella-associated protein 69 from Mus musculus (Mouse).